We begin with the raw amino-acid sequence, 424 residues long: uncharacterized protein (424 aa).

It belongs to the serpin family.

This is an uncharacterized protein from Methanosarcina acetivorans (strain ATCC 35395 / DSM 2834 / JCM 12185 / C2A).